Here is a 647-residue protein sequence, read N- to C-terminus: MACSLQKLFAVEEEFEDEDFLSAVEDAENRFTGSLPVNAGRLRPVSSRPQETVQAQSSRLLLLHPTAPSEALGLPDLDLCLPASSTPSADSRPSCIGAAPLRPVSTSSSWIGNQRRVTVTEVLRETARPQSSALHPLLTFESQQQQVGGFEGPEQDEFDKVLASMELEEPGMELECGVSSEAIPILPAQQREGSVLAKKARVVDLSGSCQKGPVPAIHKAGIMSAQDESLDPVIQCRTPRPPLRPGAVGHLPVPTALTVPTQQLHWEVCPQRSPVQALQPLQAARGTIQSSPQNRFPCQPFQSPSSWLSGKAHLPRPRTPNSSCSTPSRTSSGLFPRIPLQPQAPVSSIGSPVGTPKGPQGALQTPIVTNHLVQLVTAASRTPQQPTHPSTRAKTRRFPGPAGILPHQQSGRSLEDIMVSAPQTPTHGALAKFQTEIVASSQASVEEDFGRGPWLTMKSTLGLDERDPSCFLCTYSIVMVLRKQAALKQLPRNKVPNMAVMIKSLTRSTMDASVVFKDPTGEMQGTVHRLLLETCQNELKPGSVLLLKQIGVFSPSLRNHYLNVTPNNLVHIYSPDSGDGSFLKPSQPFPKDSGSFQHDVAAKPEEGFRTAQNLEAEASPEEELPEADDLDGLLSELPEDFFCGTSS.

A Phosphoserine modification is found at Ser47. Disordered stretches follow at residues 284–361, 380–399, and 581–631; these read ARGT…GPQG, SRTPQQPTHPSTRAKTRRFP, and SFLK…DDLD. Asymmetric dimethylarginine is present on residues Arg285, Arg295, Arg329, and Arg337. Residues 287 to 308 are compositionally biased toward polar residues; the sequence is TIQSSPQNRFPCQPFQSPSSWL. Residues 319–332 show a composition bias toward low complexity; that stretch reads TPNSSCSTPSRTSS. Positions 380–390 are enriched in polar residues; the sequence is SRTPQQPTHPS. Residues 618–631 are compositionally biased toward acidic residues; sequence ASPEEELPEADDLD.

In terms of assembly, interacts with MCM8; this interaction is necessary for MCM8-MCM9 helicase complex recruitment to DNA damage sites. Interacts with RPA1; this interaction associates HROB with the RPA complex.

The protein resides in the nucleus. Its subcellular location is the chromosome. DNA-binding protein involved in homologous recombination that acts by recruiting the MCM8-MCM9 helicase complex to sites of DNA damage to promote DNA repair synthesis. This Homo sapiens (Human) protein is Homologous recombination OB-fold protein.